A 226-amino-acid chain; its full sequence is AN1-type zinc finger protein 3 homolog (226 aa).

Residues 12-44 (PSLPPRCPCGFWGSSKTMNLCSKCFADFQKKQP) form an A20-type zinc finger. Zn(2+) contacts are provided by C18, C20, C32, and C35. Residues 42-149 (KQPDEDTAPS…DRPDNSSRSK (108 aa)) form a disordered region. Polar residues-rich tracts occupy residues 49-59 (APSTSSSQSDL), 67-92 (DNGN…NVDS), and 105-114 (AHVSLTTPSK). Positions 134–146 (RLLDSGDRPDNSS) are enriched in basic and acidic residues. The segment at 150-199 (QKSRRRCFRCQIKLELVQQELGSCRCGYVFCMLHRLPEQHDCTFDHMGRG) adopts an AN1-type zinc-finger fold. C156, C159, C173, C175, C180, H183, H189, and C191 together coordinate Zn(2+).

The protein is AN1-type zinc finger protein 3 homolog (zfand3) of Xenopus laevis (African clawed frog).